We begin with the raw amino-acid sequence, 240 residues long: Endonuclease V (240 aa).

Residues D46 and D116 each contribute to the Mg(2+) site.

Belongs to the endonuclease V family. Requires Mg(2+) as cofactor.

It is found in the cytoplasm. The enzyme catalyses Endonucleolytic cleavage at apurinic or apyrimidinic sites to products with a 5'-phosphate.. Its function is as follows. DNA repair enzyme involved in the repair of deaminated bases. Selectively cleaves double-stranded DNA at the second phosphodiester bond 3' to a deoxyinosine leaving behind the intact lesion on the nicked DNA. This chain is Endonuclease V, found in Rhodospirillum centenum (strain ATCC 51521 / SW).